Here is a 191-residue protein sequence, read N- to C-terminus: Adenine phosphoribosyltransferase (191 aa).

Belongs to the purine/pyrimidine phosphoribosyltransferase family. As to quaternary structure, homodimer.

It is found in the cytoplasm. It carries out the reaction AMP + diphosphate = 5-phospho-alpha-D-ribose 1-diphosphate + adenine. It functions in the pathway purine metabolism; AMP biosynthesis via salvage pathway; AMP from adenine: step 1/1. Catalyzes a salvage reaction resulting in the formation of AMP, that is energically less costly than de novo synthesis. The sequence is that of Adenine phosphoribosyltransferase from Clavibacter sepedonicus (Clavibacter michiganensis subsp. sepedonicus).